A 128-amino-acid chain; its full sequence is Large ribosomal subunit protein bL17 (128 aa).

This sequence belongs to the bacterial ribosomal protein bL17 family. Part of the 50S ribosomal subunit. Contacts protein L32.

The protein is Large ribosomal subunit protein bL17 of Vibrio cholerae serotype O1 (strain ATCC 39541 / Classical Ogawa 395 / O395).